Consider the following 402-residue polypeptide: Enoyl-[acyl-carrier-protein] reductase [NADH] (402 aa).

Residues 48–53 (GASSGY), 74–75 (FE), 111–112 (DA), and 140–141 (LA) each bind NAD(+). Tyrosine 226 is a binding site for substrate. Tyrosine 236 (proton donor) is an active-site residue. Residues lysine 245 and 274 to 276 (VVT) contribute to the NAD(+) site.

The protein belongs to the TER reductase family. As to quaternary structure, monomer.

The catalysed reaction is a 2,3-saturated acyl-[ACP] + NAD(+) = a (2E)-enoyl-[ACP] + NADH + H(+). It catalyses the reaction a 2,3-saturated acyl-CoA + NAD(+) = a (2E)-enoyl-CoA + NADH + H(+). It participates in lipid metabolism; fatty acid biosynthesis. Its function is as follows. Involved in the final reduction of the elongation cycle of fatty acid synthesis (FAS II). Catalyzes the reduction of a carbon-carbon double bond in an enoyl moiety that is covalently linked to an acyl carrier protein (ACP). It can also use crotonyl-CoA. The polypeptide is Enoyl-[acyl-carrier-protein] reductase [NADH] (Xanthomonas oryzae pv. oryzae (strain MAFF 311018)).